The chain runs to 407 residues: Protein NIS1 (407 aa).

Positions 40–61 (TSNSNSNSNSNSNTNSNTNSNS) are enriched in low complexity. 2 disordered regions span residues 40–64 (TSNSNSNSNSNSNTNSNTNSNSDTK) and 251–315 (RSIR…KLNT). Phosphoserine occurs at positions 260 and 264. The span at 266–276 (PTTTPATATKT) shows a compositional bias: low complexity. Positions 277-302 (IKQNSTTPTTRSVYNKNVGRSNTSPS) are enriched in polar residues. Residues serine 300 and serine 302 each carry the phosphoserine modification. Over residues 306 to 315 (HPKRRGKLNT) the composition is skewed to basic residues. The short motif at 391–398 (IIIPDSQD) is the SUMO-binding element.

Interacts with CBF2, GIS1, NAP1, PRM8, REI1, SHS1 and SMT3.

Its subcellular location is the bud neck. It is found in the cytoplasm. It localises to the cell cortex. Functionally, may be involved in a mitotic signaling network. Binds sumoylated proteins and may stabilize SUMO chains. The protein is Protein NIS1 (NIS1) of Saccharomyces cerevisiae (strain YJM789) (Baker's yeast).